We begin with the raw amino-acid sequence, 451 residues long: Prenyltransferase asqH1 (451 aa).

The interval 14–37 (AEDQSTRKVHWGQEGSGQSPEARP) is disordered. An L-tryptophan-binding site is contributed by E120. The substrate site is built by R137, R274, K276, Y278, and Y373.

The protein belongs to the tryptophan dimethylallyltransferase family.

The catalysed reaction is quinolinone B + dimethylallyl diphosphate = peniprequinolone + diphosphate. It participates in secondary metabolite biosynthesis. It functions in the pathway alkaloid biosynthesis. The protein operates within mycotoxin biosynthesis. Its function is as follows. Prenyltransferase; part of the gene cluster that mediates the biosynthesis of the aspoquinolone mycotoxins. Within the pathway, the prenyltransferase asqH1 catalyzes the canonical Friedel-Crafts alkylation of quinolinone B with dimethylallyl cation to yield dimethylallyl quinolone. The first step of the pathway is catalyzed by the nonribosomal peptide synthetase asqK that condenses anthranilic acid and O-methyl-L-tyrosine to produce 4'-methoxycyclopeptin. 4'-methoxycyclopeptin is then converted to 4'-methoxydehydrocyclopeptin by the ketoglutarate-dependent dioxygenase asqJ. AsqJ also converts its first product 4'-methoxydehydrocyclopeptin to 4'-methoxycyclopenin. The following conversion of 4'-methoxycyclopenin into 4'-methoxyviridicatin is catalyzed by the cyclopenase asqI. 4'-methoxyviridicatin is the precursor of quinolone natural products, and is further converted to quinolinone B. The prenyltransferase asqH1 then catalyzes the canonical Friedel-Crafts alkylation of quinolinone B with dimethylallyl cation to yield dimethylallyl quinolone, which is subjected to FAD-dependent dehydrogenation by the FAD-linked oxidoreductase asqF to yield conjugated aryl diene. The delta(3') double bond then serves as the site of the second alkylation with DMAPP catalyzed by the prenyltransferase asqH2 to yield a carbenium ion intermediate, which can be attacked by H(2)O to yield a styrenyl quinolone containing a C3'-hydroxyprenyl chain. The FAD-dependent monooxygenase asqG performs epoxidation of the terminal C7'-C8' olefin. Finally, after dehydratation of the epoxide at C3 by asqC, the quinolone epoxide rearrangement protein asqO catalyzes an enzymatic 3-exo-tet cyclization to yield the cyclopropyl-THF ring system in aspoquinolone. This Emericella nidulans (strain FGSC A4 / ATCC 38163 / CBS 112.46 / NRRL 194 / M139) (Aspergillus nidulans) protein is Prenyltransferase asqH1.